A 130-amino-acid polypeptide reads, in one-letter code: Small ribosomal subunit protein uS9 (130 aa).

It belongs to the universal ribosomal protein uS9 family.

This Shewanella amazonensis (strain ATCC BAA-1098 / SB2B) protein is Small ribosomal subunit protein uS9.